A 553-amino-acid chain; its full sequence is Putative transport protein YidE (553 aa).

A run of 5 helical transmembrane segments spans residues 4-24 (IALTVSILALVAVVGLFIGNV), 28-48 (GIGLGIGGVLFGGIIVGHFVS), 65-85 (FGLILFVYTIGIQVGPGFFAS), 95-115 (LFAVLIVIIGGLVTAILHKLF), and 158-178 (MSYAMAYPFGICGILFTMWML). RCK C-terminal domains follow at residues 191–276 (QQHE…VIGQ) and 279–361 (DTSL…VLGN). 6 helical membrane-spanning segments follow: residues 371-391 (MLPVFIGIGLGVLLGSIPVFV), 393-413 (GFPAALKLGLAGGPLIMALIL), 439-459 (IVLFLSVVGLKSGGDFVNTLV), 464-484 (LSWIGYGALITAVPLITVGIL), 493-513 (YLTMCGMLAGSMTDPPALAFA), and 533-553 (LVMFLRIITPQLLAVLFWSIG).

Belongs to the AAE transporter (TC 2.A.81) family. YidE subfamily.

The protein localises to the cell membrane. The chain is Putative transport protein YidE from Escherichia coli O7:K1 (strain IAI39 / ExPEC).